The primary structure comprises 147 residues: Large ribosomal subunit protein uL11 (147 aa).

The protein belongs to the universal ribosomal protein uL11 family. In terms of assembly, part of the ribosomal stalk of the 50S ribosomal subunit. Interacts with L10 and the large rRNA to form the base of the stalk. L10 forms an elongated spine to which L12 dimers bind in a sequential fashion forming a multimeric L10(L12)X complex. Post-translationally, one or more lysine residues are methylated.

Functionally, forms part of the ribosomal stalk which helps the ribosome interact with GTP-bound translation factors. This Phocaeicola vulgatus (strain ATCC 8482 / DSM 1447 / JCM 5826 / CCUG 4940 / NBRC 14291 / NCTC 11154) (Bacteroides vulgatus) protein is Large ribosomal subunit protein uL11.